A 186-amino-acid polypeptide reads, in one-letter code: Ribosomal RNA small subunit methyltransferase G (186 aa).

S-adenosyl-L-methionine contacts are provided by residues G59, F64, 110–111 (IE), and R124.

Belongs to the methyltransferase superfamily. RNA methyltransferase RsmG family.

The protein resides in the cytoplasm. The enzyme catalyses guanosine(527) in 16S rRNA + S-adenosyl-L-methionine = N(7)-methylguanosine(527) in 16S rRNA + S-adenosyl-L-homocysteine. Functionally, specifically methylates the N7 position of guanine in position 527 of 16S rRNA. The protein is Ribosomal RNA small subunit methyltransferase G of Campylobacter curvus (strain 525.92).